A 141-amino-acid polypeptide reads, in one-letter code: Myosin regulatory light chain cdc4 (141 aa).

2 positions are modified to phosphoserine: Ser2 and Ser6. EF-hand domains are found at residues 3-38 (TDDS…CGQN), 74-109 (GDPE…LGEK), and 109-141 (KLSN…ILAN). Positions 87, 89, 91, 93, and 98 each coordinate Ca(2+).

Binds to myosin II chains myo2 and myo3. Interacts with vps27 and a PI 4-kinase pik1. Phosphorylated on either Ser-2 or Ser-6 but not both. Phosphorylation is not essential for the function of the protein.

Its subcellular location is the cytoplasm. Involved in cytokinesis. Required for the formation and function of the contractile ring. The protein is Myosin regulatory light chain cdc4 (cdc4) of Schizosaccharomyces pombe (strain 972 / ATCC 24843) (Fission yeast).